Here is a 173-residue protein sequence, read N- to C-terminus: Chromophore lyase CpcS/CpeS 3 (173 aa).

It belongs to the CpcS/CpeS biliprotein lyase family.

Functionally, covalently attaches a chromophore to Cys residue(s) of phycobiliproteins. The protein is Chromophore lyase CpcS/CpeS 3 of Trichodesmium erythraeum (strain IMS101).